The following is a 618-amino-acid chain: Origin recognition complex subunit 2 (618 aa).

Disordered stretches follow at residues 1–116 (MSAS…AAKD) and 149–274 (NATP…KKSN). Thr24 carries the post-translational modification Phosphothreonine. Phosphoserine occurs at positions 26 and 30. Positions 49-59 (TSRRSTRRPSP) are enriched in basic residues. Basic and acidic residues predominate over residues 70-79 (SNGKGQEERI). Phosphoserine occurs at positions 87, 91, and 92. Positions 94 to 107 (AEDQEEEESIEESE) are enriched in acidic residues. Phosphothreonine occurs at positions 151, 154, 157, 160, 167, 170, and 181. Residues 151–161 (TPCTPKTPKTP) show a composition bias toward low complexity. Basic residues predominate over residues 183-193 (AHVRTRVKKQI). Residues 199–208 (DSDEDFSGDE) are compositionally biased toward acidic residues. Residues 219–233 (SSSSSSSDAGNSSDN) show a composition bias toward low complexity. Thr258 carries the phosphothreonine modification. Ser260 is modified (phosphoserine).

The protein belongs to the ORC2 family. In terms of assembly, ORC is composed of six subunits. Interacts with Mcm10. Interacts with CG9890. Interaction between the TREX-2/AMEX complex and the ORC complex is required for ORC localization to mRNPs, and consequently mRNA export.

It localises to the nucleus. The protein resides in the chromosome. Its subcellular location is the centromere. Component of the origin recognition complex (ORC) that binds origins of replication. DNA-binding is ATP-dependent, however specific DNA sequences that define origins of replication have not been identified so far. ORC is required to assemble the pre-replication complex necessary to initiate DNA replication. As part of the ORC complex, might also have a role in mRNA export. This is Origin recognition complex subunit 2 (Orc2) from Drosophila melanogaster (Fruit fly).